Here is a 411-residue protein sequence, read N- to C-terminus: Arginine deiminase (411 aa).

Residue C401 is the Amidino-cysteine intermediate of the active site.

The protein belongs to the arginine deiminase family. Glycosylated.

It is found in the cytoplasm. The catalysed reaction is L-arginine + H2O = L-citrulline + NH4(+). The protein operates within amino-acid degradation; L-arginine degradation via ADI pathway; carbamoyl phosphate from L-arginine: step 1/2. The protein is Arginine deiminase (arcA) of Streptococcus pyogenes serotype M1.